The primary structure comprises 231 residues: Cytidylate kinase 1 (231 aa).

Position 7–15 (7–15 (GPSGAGKGT)) interacts with ATP.

Belongs to the cytidylate kinase family. Type 1 subfamily.

It is found in the cytoplasm. The enzyme catalyses CMP + ATP = CDP + ADP. The catalysed reaction is dCMP + ATP = dCDP + ADP. The chain is Cytidylate kinase 1 from Haemophilus influenzae (strain ATCC 51907 / DSM 11121 / KW20 / Rd).